The primary structure comprises 451 residues: Trigger factor (451 aa).

The PPIase FKBP-type domain occupies 173–258; sequence GDRVTLDFVG…LKKIEWAHLP (86 aa).

Belongs to the FKBP-type PPIase family. Tig subfamily.

Its subcellular location is the cytoplasm. The enzyme catalyses [protein]-peptidylproline (omega=180) = [protein]-peptidylproline (omega=0). Involved in protein export. Acts as a chaperone by maintaining the newly synthesized protein in an open conformation. Functions as a peptidyl-prolyl cis-trans isomerase. The protein is Trigger factor of Cupriavidus pinatubonensis (strain JMP 134 / LMG 1197) (Cupriavidus necator (strain JMP 134)).